Consider the following 212-residue polypeptide: Large ribosomal subunit protein bL25 (212 aa).

The segment at 179-212 (EPEEEELPEDDEAAAEGEDAAAGEEAEAPAESED) is disordered.

This sequence belongs to the bacterial ribosomal protein bL25 family. CTC subfamily. As to quaternary structure, part of the 50S ribosomal subunit; part of the 5S rRNA/L5/L18/L25 subcomplex. Contacts the 5S rRNA. Binds to the 5S rRNA independently of L5 and L18.

Functionally, this is one of the proteins that binds to the 5S RNA in the ribosome where it forms part of the central protuberance. In Corynebacterium urealyticum (strain ATCC 43042 / DSM 7109), this protein is Large ribosomal subunit protein bL25.